Reading from the N-terminus, the 131-residue chain is D-ribose pyranase (131 aa).

H20 serves as the catalytic Proton donor. Substrate is bound by residues D28, H98, and 120–122 (YAN).

This sequence belongs to the RbsD / FucU family. RbsD subfamily. Homodecamer.

It localises to the cytoplasm. The catalysed reaction is beta-D-ribopyranose = beta-D-ribofuranose. It functions in the pathway carbohydrate metabolism; D-ribose degradation; D-ribose 5-phosphate from beta-D-ribopyranose: step 1/2. Catalyzes the interconversion of beta-pyran and beta-furan forms of D-ribose. This Bacillus thuringiensis (strain Al Hakam) protein is D-ribose pyranase.